The following is a 371-amino-acid chain: Deoxyuridine 5'-triphosphate nucleotidohydrolase (371 aa).

Residues 260–262 and 366–367 contribute to the substrate site; these read RSS and FG. Residues 350 to 371 form a disordered region; sequence NEFDAEAPPSERGTGGFGSTGI. The span at 362–371 shows a compositional bias: gly residues; sequence GTGGFGSTGI.

This sequence belongs to the dUTPase family. Mg(2+) is required as a cofactor.

The catalysed reaction is dUTP + H2O = dUMP + diphosphate + H(+). Involved in nucleotide metabolism: produces dUMP, the immediate precursor of thymidine nucleotides and decreases the intracellular concentration of dUTP to avoid uracil incorporation into viral DNA. This Homo sapiens (Human) protein is Deoxyuridine 5'-triphosphate nucleotidohydrolase.